The chain runs to 233 residues: uncharacterized protein (233 aa).

This is an uncharacterized protein from Acanthamoeba polyphaga (Amoeba).